The sequence spans 409 residues: Cdc42 effector protein 1 (409 aa).

Residues 1–29 form a disordered region; it reads MPGPQGGTGAPTMSLGKLSPVGWVSSSHG. Residues S19 and S27 each carry the phosphoserine modification. T34 carries the phosphothreonine modification. Residues 38–52 enclose the CRIB domain; that stretch reads ISPPLGDFRHTMHVG. S39 is modified (phosphoserine). An Omega-N-methylarginine modification is found at R53. A phosphoserine mark is found at S65, S77, S101, S113, S121, and S139. Residues 167–189 are compositionally biased toward basic and acidic residues; the sequence is PRVEKHSNRDRDRDPDHSQDREQ. The tract at residues 167-203 is disordered; that stretch reads PRVEKHSNRDRDRDPDHSQDREQSSFPSEPTPNPELR. Residues S191, S205, S207, and S210 each carry the phosphoserine modification. Tandem repeats lie at residues 235-241, 242-248, and 255-261. The segment at 235–284 is 3 X 7 AA tandem repeats of [PT]-[AT]-A-[ENT]-[PT]-[PTS]-[AG]; it reads PAAETPVPTANPPAPAANPAPTAKPPAHAITTLDAVTSLPASAVTSLPAP. Disordered stretches follow at residues 237 to 260 and 282 to 329; these read AETPVPTANPPAPAANPAPTAKPP and PAPA…FDRH. Residues 243–258 are compositionally biased toward pro residues; that stretch reads TANPPAPAANPAPTAK. Positions 282 to 291 are enriched in low complexity; the sequence is PAPAAASSPS. Residues S312, S332, S368, and S371 each carry the phosphoserine modification.

It belongs to the BORG/CEP family. Interacts with RHOQ and CDC42, in a GTP-dependent manner.

The protein localises to the endomembrane system. It is found in the cytoplasm. It localises to the cytoskeleton. In terms of biological role, probably involved in the organization of the actin cytoskeleton. Induced membrane extensions in fibroblasts. The chain is Cdc42 effector protein 1 (Cdc42ep1) from Mus musculus (Mouse).